A 703-amino-acid polypeptide reads, in one-letter code: MTQLSTKILWLFVAALGAICFGYLALQNGESVSAIYLVVAAVCIYMIGYRFYGSFVAYKVLELDKNRATPALVENDGRDFVPTNKAVLFGHHFAAIAGAGPLVGPILAAQMGYLPSMLWILVGGVLAGAVHDFVVLFISTRRKGRSLGEMIKDEMGKFTGGVAMVAIFGIMLIIIAILAMVVVKALAESPWGLFTIAMTIPIAIFMGIYMRFIRPGRVGEASIIGFVLLILAIHYGSVIAADPYWAKIFTLEAPTLAIVMMAYGFIASVLPVWFLLAPRDYLSTFLKIGVIVVMAVAIVLVAPDLQMPKANTQYFDGTGPVFAGGVFPFLFITIACGAISGFHALISSGTTPKMLENETHTLAVGYGSMLAESAVAIMALICACILHPGLYFAINSSSALIGTDVVNVAQTISSWGFSITPEEITTLTTNIGEYTILSRTGGAPTFAIGVALILHELFGGVDLMAFWYHFAILFEALFILTAVDAGTRACRFMVQDILGNVYKPLGDIHNYPAGLLATALSVAGWGYFLYQGAIDPKGGIYTLWPLFGVSNQMLAGMALLLATTILVKMGKARYTWVTLVPAVFVLVATLYGGIQKIMPYEEGNKIANAVSHVAAVSIQSQKIKDLEFKLNNTKDEKEISTIRKEISIATQNKVGNLLNAILCVFFMIATLLVIISCIGICLGKIKIPLKETKYIKIDEFQKI.

The next 16 membrane-spanning stretches (helical) occupy residues 6–26 (TKIL…YLAL), 29–49 (GESV…MIGY), 87–107 (VLFG…GPIL), 118–138 (LWIL…VLFI), 162–182 (VAMV…AMVV), 190–210 (PWGL…GIYM), 221–241 (ASII…VIAA), 256–276 (LAIV…WFLL), 282–302 (LSTF…VLVA), 319–339 (GPVF…CGAI), 374–394 (AVAI…YFAI), 463–483 (LMAF…LTAV), 514–534 (GLLA…QGAI), 547–567 (FGVS…TILV), 574–594 (YTWV…YGGI), and 660–680 (AILC…CIGI).

Belongs to the peptide transporter carbon starvation (CstA) (TC 2.A.114) family.

Its subcellular location is the cell inner membrane. Involved in the uptake of dipeptides and tripeptides. May influence host-pathogen interactions. Involved in motility and agglutination, and has a role in stimulation of dendritic cells. The chain is Peptide transporter CstA from Campylobacter jejuni subsp. jejuni serotype O:2 (strain ATCC 700819 / NCTC 11168).